The primary structure comprises 611 residues: Pescadillo homolog (611 aa).

Residues 310–335 (VQMGDPDEASPGEEEQFVAHASKSAP) form a disordered region. Acidic residues predominate over residues 314–325 (DPDEASPGEEEQ). Residues 354–455 (PSSRLFAPYT…KILLEDTYAQ (102 aa)) form the BRCT domain. 2 disordered regions span residues 469-506 (YEGA…ESNT) and 545-611 (VKKA…AGGK). Residues 482–498 (ADMDVETDGEEGEADAS) are compositionally biased toward acidic residues. Basic and acidic residues-rich tracts occupy residues 552-569 (KKPD…KDMN) and 579-602 (KLYE…EQRK). Residues 580–609 (LYEKMKYSQQKKAAEKEKLEQRKKQLQKAG) adopt a coiled-coil conformation.

The protein belongs to the pescadillo family. As to quaternary structure, component of the NOP7 complex, composed of ERB1, NOP7 and YTM1. The complex is held together by ERB1, which interacts with NOP7 via its N-terminal domain and with YTM1 via a high-affinity interaction between the seven-bladed beta-propeller domains of the 2 proteins. The NOP7 complex associates with the 66S pre-ribosome.

It is found in the nucleus. It localises to the nucleolus. Its subcellular location is the nucleoplasm. Component of the NOP7 complex, which is required for maturation of the 25S and 5.8S ribosomal RNAs and formation of the 60S ribosome. This Coprinopsis cinerea (strain Okayama-7 / 130 / ATCC MYA-4618 / FGSC 9003) (Inky cap fungus) protein is Pescadillo homolog.